Here is a 203-residue protein sequence, read N- to C-terminus: Ras-related protein Rab-7L1 (203 aa).

The GTP site is built by S33, K34, H35, Y36, K37, and T39. An Effector region motif is present at residues 36–44 (YKSTVGVDF). T71 is modified (phosphothreonine; by LRRK2). S72 is modified (phosphoserine; by LRRK2). K126, V156, and K157 together coordinate GTP. S-geranylgeranyl cysteine attachment occurs at residues C202 and C203.

This sequence belongs to the small GTPase superfamily. Rab family. As to quaternary structure, interacts with LRRK2 (via the N-terminus); this interaction is direct and stimulates kinase activity. In case of Salmonella enterica serovar Typhimurium (S.typhimurium) infection, is proteolytically cleaved between Gly-41 and Val-42 by the GtgE viral protease encoded on the Gifsy-2 lysogen bacteriophage, which therefore prevents the recruitment of RAB29 to S.typhimurium-containing vacuoles. In contrast, no proteolytically cleavage is detected in S.typhi-infected cells. Ubiquitous.

It is found in the cell membrane. Its subcellular location is the cytoplasm. The protein resides in the perinuclear region. The protein localises to the golgi apparatus. It localises to the golgi apparatus membrane. It is found in the trans-Golgi network. Its subcellular location is the vacuole. The protein resides in the cytoskeleton. In terms of biological role, the small GTPases Rab are key regulators in vesicle trafficking. Essential for maintaining the integrity of the endosome-trans-Golgi network structure. Together with LRRK2, plays a role in the retrograde trafficking pathway for recycling proteins, such as mannose 6 phosphate receptor (M6PR), between lysosomes and the Golgi apparatus in a retromer-dependent manner. Recruits LRRK2 to the Golgi complex and stimulates LRRK2 kinase activity. Stimulates phosphorylation of RAB10 'Thr-73' by LRRK2. Regulates neuronal process morphology in the intact central nervous system (CNS). May play a role in the formation of typhoid toxin transport intermediates during Salmonella enterica serovar Typhi (S.typhi) epithelial cell infection. This is Ras-related protein Rab-7L1 (RAB29) from Homo sapiens (Human).